The chain runs to 506 residues: Galactose/methyl galactoside import ATP-binding protein MglA (506 aa).

ABC transporter domains lie at 14–249 (LEMS…VGRS) and 264–506 (VILE…SLHL). Position 46-53 (46-53 (GENGAGKS)) interacts with ATP.

This sequence belongs to the ABC transporter superfamily. Galactose/methyl galactoside importer (TC 3.A.1.2.3) family. In terms of assembly, the complex is composed of one ATP-binding protein (MglA), two transmembrane proteins (MglC) and a solute-binding protein (MglB).

The protein resides in the cell inner membrane. It carries out the reaction D-galactose(out) + ATP + H2O = D-galactose(in) + ADP + phosphate + H(+). It catalyses the reaction methyl beta-D-galactoside(out) + ATP + H2O = methyl beta-D-galactoside(in) + ADP + phosphate + H(+). Part of the ABC transporter complex MglABC involved in galactose/methyl galactoside import. Responsible for energy coupling to the transport system. The polypeptide is Galactose/methyl galactoside import ATP-binding protein MglA (Escherichia coli O6:K15:H31 (strain 536 / UPEC)).